We begin with the raw amino-acid sequence, 172 residues long: Glutamyl-tRNA(Gln) amidotransferase subunit C-3, mitochondrial (172 aa).

A disordered region spans residues 49–71 (KHPSKVPQRPNKSTIDGQSTPTR). Polar residues predominate over residues 58–71 (PNKSTIDGQSTPTR).

It belongs to the GatC family. In terms of assembly, subunit of the heterotrimeric GatCAB amidotransferase (AdT) complex, composed of A, B and C subunits.

The protein localises to the mitochondrion. The catalysed reaction is L-glutamyl-tRNA(Gln) + L-glutamine + ATP + H2O = L-glutaminyl-tRNA(Gln) + L-glutamate + ADP + phosphate + H(+). Functionally, allows the formation of correctly charged Gln-tRNA(Gln) through the transamidation of misacylated Glu-tRNA(Gln) in the mitochondria. The reaction takes place in the presence of glutamine and ATP through an activated gamma-phospho-Glu-tRNA(Gln). The sequence is that of Glutamyl-tRNA(Gln) amidotransferase subunit C-3, mitochondrial from Culex quinquefasciatus (Southern house mosquito).